Reading from the N-terminus, the 75-residue chain is Putative membrane protein insertion efficiency factor 2 (75 aa).

It belongs to the UPF0161 family.

The protein localises to the cell membrane. In terms of biological role, could be involved in insertion of integral membrane proteins into the membrane. The sequence is that of Putative membrane protein insertion efficiency factor 2 from Bacillus licheniformis (strain ATCC 14580 / DSM 13 / JCM 2505 / CCUG 7422 / NBRC 12200 / NCIMB 9375 / NCTC 10341 / NRRL NRS-1264 / Gibson 46).